A 283-amino-acid chain; its full sequence is Protoheme IX farnesyltransferase (283 aa).

Helical transmembrane passes span 6–26 (LLLT…AGFL), 35–55 (FGLF…GCVF), 85–105 (AIVF…FYTN), 106–126 (LLTL…YSIW), 131–151 (VYGT…GYCA), 160–180 (AFIL…SIAI), 207–227 (ILLY…FHFT), 230–250 (LYLI…LRGL), and 262–282 (MFRF…FDLV).

Belongs to the UbiA prenyltransferase family. Protoheme IX farnesyltransferase subfamily.

The protein localises to the cell inner membrane. The enzyme catalyses heme b + (2E,6E)-farnesyl diphosphate + H2O = Fe(II)-heme o + diphosphate. It functions in the pathway porphyrin-containing compound metabolism; heme O biosynthesis; heme O from protoheme: step 1/1. Functionally, converts heme B (protoheme IX) to heme O by substitution of the vinyl group on carbon 2 of heme B porphyrin ring with a hydroxyethyl farnesyl side group. The protein is Protoheme IX farnesyltransferase of Protochlamydia amoebophila (strain UWE25).